The chain runs to 368 residues: Flagellar P-ring protein (368 aa).

The first 22 residues, Met1 to Ala22, serve as a signal peptide directing secretion.

This sequence belongs to the FlgI family. The basal body constitutes a major portion of the flagellar organelle and consists of four rings (L,P,S, and M) mounted on a central rod.

It localises to the periplasm. The protein resides in the bacterial flagellum basal body. Its function is as follows. Assembles around the rod to form the L-ring and probably protects the motor/basal body from shearing forces during rotation. The polypeptide is Flagellar P-ring protein (Bordetella pertussis (strain Tohama I / ATCC BAA-589 / NCTC 13251)).